The following is a 61-amino-acid chain: Protein SspF (61 aa).

This sequence belongs to the alpha/beta-type SASP family.

In terms of biological role, may play some important role in either sporulation or the dormant spore. In Bacillus subtilis (strain 168), this protein is Protein SspF (sspF).